A 385-amino-acid chain; its full sequence is Guanine nucleotide-binding protein alpha-5 subunit (385 aa).

Gly-2 carries N-myristoyl glycine lipidation. Residue Cys-6 is the site of S-palmitoyl cysteine attachment. The G-alpha domain occupies 32–385 (RKIKMLLLGI…NKNIETLSLE (354 aa)). The segment at 35–48 (KMLLLGISDSGKST) is G1 motif. Residues 40–47 (GISDSGKS), 174–180 (IHMRQTT), 199–203 (DVGGQ), 298–301 (NKID), and Ala-357 contribute to the GTP site. Mg(2+) contacts are provided by Ser-47 and Thr-180. Residues 172-180 (DLIHMRQTT) are G2 motif. A G3 motif region spans residues 195–204 (IRLIDVGGQK). The G4 motif stretch occupies residues 294-301 (MLFLNKID). The tract at residues 355–360 (TQATIT) is G5 motif.

This sequence belongs to the G-alpha family. As to quaternary structure, g proteins are composed of 3 units; alpha, beta and gamma. The alpha chain contains the guanine nucleotide binding site.

In terms of biological role, guanine nucleotide-binding proteins (G proteins) are involved as modulators or transducers in various transmembrane signaling systems. The sequence is that of Guanine nucleotide-binding protein alpha-5 subunit (gpa-5) from Caenorhabditis briggsae.